The chain runs to 305 residues: Ribosomal protein L11 methyltransferase (305 aa).

Residues Thr-155, Gly-176, Asp-198, and Asn-241 each coordinate S-adenosyl-L-methionine.

Belongs to the methyltransferase superfamily. PrmA family.

The protein localises to the cytoplasm. It carries out the reaction L-lysyl-[protein] + 3 S-adenosyl-L-methionine = N(6),N(6),N(6)-trimethyl-L-lysyl-[protein] + 3 S-adenosyl-L-homocysteine + 3 H(+). Its function is as follows. Methylates ribosomal protein L11. The sequence is that of Ribosomal protein L11 methyltransferase from Carboxydothermus hydrogenoformans (strain ATCC BAA-161 / DSM 6008 / Z-2901).